A 745-amino-acid polypeptide reads, in one-letter code: Cytoskeleton-associated protein 2-like (745 aa).

Disordered stretches follow at residues 26–305 (KGKL…VNRV), 319–362 (PATE…LGPQ), 422–483 (FPPQ…TYKR), and 608–638 (EAVT…PCPS). Composition is skewed to polar residues over residues 67 to 89 (SKTT…ASQK) and 101 to 136 (GLTS…SRNP). The KEN box signature appears at 183 to 185 (KEN). Residues 192–202 (KPEKPDPELHS) are compositionally biased toward basic and acidic residues. K195 participates in a covalent cross-link: Glycyl lysine isopeptide (Lys-Gly) (interchain with G-Cter in SUMO1); alternate. A Glycyl lysine isopeptide (Lys-Gly) (interchain with G-Cter in SUMO2); alternate cross-link involves residue K195. Polar residues-rich tracts occupy residues 205–216 (KPNTGSSNQTQK), 224–233 (LSKSSVTQTA), 242–253 (FIRNTQIRTQAV), and 284–301 (NKTQ…QDIT). The span at 427–442 (HFLNKTAPRTQASTAA) shows a compositional bias: polar residues. Residues 459 to 475 (KKPEGEDRRKQLEEWQK) show a composition bias toward basic and acidic residues. Over residues 608 to 624 (EAVTSDTSAAGTNTTSA) the composition is skewed to polar residues. A Phosphoserine modification is found at S745.

It belongs to the CKAP2 family. In terms of processing, ubiquitinated by the anaphase promoting complex/cyclosome (APC/C). As to expression, highly expressed in regions of active neurogenesis and neural stem/progenitor cells (NSPCs), both embryonic and adult, not detected in lung, liver, kidney, heart, and skeletal muscle.

The protein localises to the cytoplasm. Its subcellular location is the cytoskeleton. It localises to the spindle pole. Its function is as follows. Microtubule-associated protein required for mitotic spindle formation and cell-cycle progression in neural progenitor cells. This chain is Cytoskeleton-associated protein 2-like (Ckap2l), found in Mus musculus (Mouse).